A 201-amino-acid chain; its full sequence is Peptide deformylase (201 aa).

Residues C121 and H163 each contribute to the Fe cation site. Residue E164 is part of the active site. H167 is a binding site for Fe cation.

It belongs to the polypeptide deformylase family. It depends on Fe(2+) as a cofactor.

The enzyme catalyses N-terminal N-formyl-L-methionyl-[peptide] + H2O = N-terminal L-methionyl-[peptide] + formate. In terms of biological role, removes the formyl group from the N-terminal Met of newly synthesized proteins. Requires at least a dipeptide for an efficient rate of reaction. N-terminal L-methionine is a prerequisite for activity but the enzyme has broad specificity at other positions. The polypeptide is Peptide deformylase (Parasynechococcus marenigrum (strain WH8102)).